We begin with the raw amino-acid sequence, 208 residues long: Small ribosomal subunit protein uS5 (208 aa).

The segment at 1–38 (MPGRERRDGGRSADDNQKKNDRRGGRRDDRRNQQQDER) is disordered. Residues 41–104 (YIERVVTINR…EEARKNFFRV (64 aa)) enclose the S5 DRBM domain.

This sequence belongs to the universal ribosomal protein uS5 family. In terms of assembly, part of the 30S ribosomal subunit. Contacts proteins S4 and S8.

Functionally, with S4 and S12 plays an important role in translational accuracy. Its function is as follows. Located at the back of the 30S subunit body where it stabilizes the conformation of the head with respect to the body. This is Small ribosomal subunit protein uS5 from Corynebacterium diphtheriae (strain ATCC 700971 / NCTC 13129 / Biotype gravis).